The following is a 532-amino-acid chain: Glucose-6-phosphate isomerase (532 aa).

The active-site Proton donor is E322. Active-site residues include H351 and K457.

Belongs to the GPI family.

It is found in the cytoplasm. It catalyses the reaction alpha-D-glucose 6-phosphate = beta-D-fructose 6-phosphate. Its pathway is carbohydrate biosynthesis; gluconeogenesis. The protein operates within carbohydrate degradation; glycolysis; D-glyceraldehyde 3-phosphate and glycerone phosphate from D-glucose: step 2/4. Its function is as follows. Catalyzes the reversible isomerization of glucose-6-phosphate to fructose-6-phosphate. This is Glucose-6-phosphate isomerase from Synechococcus sp. (strain JA-3-3Ab) (Cyanobacteria bacterium Yellowstone A-Prime).